Here is an 82-residue protein sequence, read N- to C-terminus: Protein WFDC11 (82 aa).

Positions 1-21 (MKPSWFPCLVFLCMLLLSALG) are cleaved as a signal peptide.

The protein resides in the secreted. The protein is Protein WFDC11 (Wfdc11) of Mus musculus (Mouse).